A 448-amino-acid polypeptide reads, in one-letter code: Phosphoglucosamine mutase (448 aa).

S108 functions as the Phosphoserine intermediate in the catalytic mechanism. S108, D247, D249, and D251 together coordinate Mg(2+). A Phosphoserine modification is found at S108.

The protein belongs to the phosphohexose mutase family. The cofactor is Mg(2+). In terms of processing, activated by phosphorylation.

The enzyme catalyses alpha-D-glucosamine 1-phosphate = D-glucosamine 6-phosphate. Its function is as follows. Catalyzes the conversion of glucosamine-6-phosphate to glucosamine-1-phosphate. The polypeptide is Phosphoglucosamine mutase (Herminiimonas arsenicoxydans).